Consider the following 1873-residue polypeptide: Voltage-dependent L-type calcium channel subunit alpha-1S (1873 aa).

The disordered stretch occupies residues 1 to 23 (MEPSSPQDEGLRKKQPKKPLPEV). The Cytoplasmic portion of the chain corresponds to 1-51 (MEPSSPQDEGLRKKQPKKPLPEVLPRPPRALFCLTLQNPLRKACISIVEWK). Residues 38-337 (NPLRKACISI…LVLGVLSGEF (300 aa)) form an I repeat. Residues 52–70 (PFETIILLTIFANCVALAV) form a helical membrane-spanning segment. The Extracellular segment spans residues 71–85 (YLPMPEDDNNSLNLG). The N-linked (GlcNAc...) asparagine glycan is linked to N79. The helical transmembrane segment at 86–106 (LEKLEYFFLTVFSIEAAMKII) threads the bilayer. The Cytoplasmic portion of the chain corresponds to 107–115 (AYGFLFHQD). Residues 116 to 136 (AYLRSGWNVLDFIIVFLGVFT) form a helical membrane-spanning segment. Residues 137-160 (AILEQVNVIQSNTAPMSSKGAGLD) are Extracellular-facing. Residues 161 to 179 (VKALRAFRVLRPLRLVSGV) traverse the membrane as a helical segment. At 180 to 196 (PSLQVVLNSIFKAMLPL) the chain is on the cytoplasmic side. The helical transmembrane segment at 197–218 (FHIALLVLFMVIIYAIIGLELF) threads the bilayer. Residues 219-279 (KGKMHKTCYY…HGITHFDNFG (61 aa)) lie on the Extracellular side of the membrane. Cystine bridges form between C226–C254 and C245–C261. The N-linked (GlcNAc...) asparagine glycan is linked to N257. Residues 280–301 (FSMLTVYQCITMEGWTDVLYWV) constitute an intramembrane region (pore-forming). Residues 290-293 (TMEG) carry the Selectivity filter of repeat I motif. E292 lines the Ca(2+) pocket. Residues 302 to 309 (NDAIGNEW) are Extracellular-facing. A helical transmembrane segment spans residues 310-330 (PWIYFVTLILLGSFFILNLVL). Topologically, residues 331-432 (GVLSGEFTKE…WKCHDLVKSR (102 aa)) are cytoplasmic. The binding to the beta subunit stretch occupies residues 357-374 (QQLEEDLRGYMSWITQGE). Residues S393 and S397 each carry the phosphoserine modification. The stretch at 418–664 (NRVFRWKCHD…VFLAIAVDNL (247 aa)) is one II repeat. Residues 433–451 (VFYWLVILIVALNTLSIAS) traverse the membrane as a helical segment. At 452-462 (EHHNQPLWLTH) the chain is on the extracellular side. The helical transmembrane segment at 463–483 (LQDIANRVLLSLFTIEMLLKM) threads the bilayer. Residues 484–494 (YGLGLRQYFMS) lie on the Cytoplasmic side of the membrane. The helical transmembrane segment at 495–514 (IFNRFDCFVVCSGILELLLV) threads the bilayer. Residues 515–523 (ESGAMTPLG) are Extracellular-facing. A helical membrane pass occupies residues 524-542 (ISVLRCIRLLRLFKITKYW). Residues 543–561 (TSLSNLVASLLNSIRSIAS) lie on the Cytoplasmic side of the membrane. Residues 562-581 (LLLLLFLFIIIFALLGMQLF) form a helical membrane-spanning segment. Residues 582–601 (GGRYDFEDTEVRRSNFDNFP) are Extracellular-facing. The segment at residues 602–623 (QALISVFQVLTGEDWNSVMYNG) is an intramembrane region (pore-forming). A Selectivity filter of repeat II motif is present at residues 612–615 (TGED). Residue E614 participates in Ca(2+) binding. At 624 to 633 (IMAYGGPSYP) the chain is on the extracellular side. A helical membrane pass occupies residues 634–653 (GVLVCIYFIILFVCGNYILL). Topologically, residues 654-799 (NVFLAIAVDN…VLCHRIVNAT (146 aa)) are cytoplasmic. Disordered regions lie at residues 673 to 717 (AQKA…IPTT) and 731 to 757 (EVKD…VSPR). The residue at position 687 (S687) is a Phosphoserine; by PKA. Residues 690–711 (LPDKTEEEKSVMAKKLEQKPKG) are compositionally biased toward basic and acidic residues. Acidic residues predominate over residues 742-751 (PGDDEEDEPE). Residues 747 to 760 (EDEPEIPVSPRPRP) are interaction with STAC, STAC2 and STAC3 (via SH3 domains). One copy of the III repeat lies at 786–1068 (NKVRVLCHRI…IFVGFVIVTF (283 aa)). Residues 800-818 (WFTNFILLFILLSSAALAA) traverse the membrane as a helical segment. Residues 819–830 (EDPIRAESVRNQ) lie on the Extracellular side of the membrane. A helical membrane pass occupies residues 831-850 (ILGYFDIAFTSVFTVEIVLK). At 851-866 (MTTYGAFLHKGSFCRN) the chain is on the cytoplasmic side. Residues 867-885 (YFNILDLLVVAVSLISMGL) form a helical membrane-spanning segment. Residues 886 to 892 (ESSTISV) lie on the Extracellular side of the membrane. A helical transmembrane segment spans residues 893–911 (VKILRVLRVLRPLRAINRA). Topologically, residues 912-930 (KGLKHVVQCVFVAIRTIGN) are cytoplasmic. Residues 931–950 (IVLVTTLLQFMFACIGVQLF) form a helical membrane-spanning segment. Topologically, residues 951–1000 (KGKFFSCNDLSKMTEEECRGYYYVYKDGDPTQMELRPRQWIHNDFHFDNV) are extracellular. A disulfide bridge connects residues C957 and C968. The interval 988–1077 (RQWIHNDFHF…FQEQGETEYK (90 aa)) is dihydropyridine binding. The segment at residues 1001–1021 (LSAMMSLFTVSTFEGWPQLLY) is an intramembrane region (pore-forming). The short motif at 1012–1015 (TFEG) is the Selectivity filter of repeat III element. E1014 serves as a coordination point for Ca(2+). Over 1022-1038 (RAIDSNEEDMGPVYNNR) the chain is Extracellular. A helical membrane pass occupies residues 1039 to 1060 (VEMAIFFIIYIILIAFFMMNIF). Residues 1061-1118 (VGFVIVTFQEQGETEYKNCELDKNQRQCVQYALKARPLRCYIPKNPYQYQVWYVVTSS) lie on the Cytoplasmic side of the membrane. An IV repeat occupies 1105–1384 (NPYQYQVWYV…LFVAVIMDNF (280 aa)). A helical transmembrane segment spans residues 1119–1140 (YFEYLMFALIMLNTICLGMQHY). The Extracellular segment spans residues 1141–1148 (HQSEEMNH). Residues 1149 to 1170 (ISDILNVAFTIIFTLEMILKLL) form a helical membrane-spanning segment. At 1171–1180 (AFKARGYFGD) the chain is on the cytoplasmic side. Residues 1181-1200 (PWNVFDFLIVIGSIIDVILS) form a helical membrane-spanning segment. Topologically, residues 1201-1231 (EIDTFLASSGGLYCLGGGCGNVDPDESARIS) are extracellular. The chain crosses the membrane as a helical span at residues 1232–1250 (SAFFRLFRVMRLIKLLSRA). Residues 1251-1268 (EGVRTLLWTFIKSFQALP) lie on the Cytoplasmic side of the membrane. A helical transmembrane segment spans residues 1269–1289 (YVALLIVMLFFIYAVIGMQMF). Residues 1290-1311 (GKIALVDGTQINRNNNFQTFPQ) lie on the Extracellular side of the membrane. An intramembrane region (pore-forming) is located at residues 1312 to 1330 (AVLLLFRCATGEAWQEILL). The Selectivity filter of repeat IV signature appears at 1321-1324 (TGEA). At 1331–1356 (ACSYGKLCDPESDYAPGEEYTCGTNF) the chain is on the extracellular side. A dihydropyridine binding region spans residues 1337 to 1403 (LCDPESDYAP…LGPHHLDEFK (67 aa)). A disulfide bridge connects residues C1338 and C1352. Residues 1349-1391 (EYTCGTNFAYYYFISFYMLCAFLIINLFVAVIMDNFDYLTRDW) are phenylalkylamine binding. The helical transmembrane segment at 1357-1381 (AYYYFISFYMLCAFLIINLFVAVIM) threads the bilayer. Over 1382–1873 (DNFDYLTRDW…SQETLIPPRP (492 aa)) the chain is Cytoplasmic. The interval 1522–1542 (KFYATFLIQEHFRKFMKRQEE) is interaction with calmodulin. S1575 bears the Phosphoserine; by PKA and CAMK2 mark. T1579 is modified (phosphothreonine; by CK2). S1617 is modified (phosphoserine; by PKA). Disordered stretches follow at residues 1689–1782 (EFPG…RPAP) and 1841–1873 (GMAS…PPRP). Low complexity predominate over residues 1847-1858 (GSLSRRSSLGSL).

This sequence belongs to the calcium channel alpha-1 subunit (TC 1.A.1.11) family. CACNA1S subfamily. Component of a calcium channel complex consisting of a pore-forming alpha subunit (CACNA1S) and the ancillary subunits CACNB1 or CACNB2, CACNG1 and CACNA2D1. The channel complex contains alpha, beta, gamma and delta subunits in a 1:1:1:1 ratio, i.e. it contains either CACNB1 or CACNB2. CACNA1S channel activity is modulated by the auxiliary subunits (CACNB1 or CACNB2, CACNG1 and CACNA2D1). Interacts with DYSF and JSRP1. Interacts with RYR1. Interacts with STAC, STAC2 and STAC3 (via their SH3 domains). Interaction with STAC3 promotes expression at the cell membrane. Interaction with STAC2 promotes expression at the cell membrane, but with much lower efficiency than STAC3. Interaction with STAC1 leads to very low levels expression at the cell membrane, much less than the levels observed upon interaction with STAC3 and STAC2. Interacts with CALM. In terms of processing, the alpha-1S subunit is found in two isoforms in the skeletal muscle: a minor form of 212 kDa containing the complete amino acid sequence, and a major form of 190 kDa derived from the full-length form by post-translational proteolysis close to Phe-1690. Phosphorylated. Phosphorylation by PKA activates the calcium channel. Both the minor and major forms are phosphorylated in vitro by PKA. Phosphorylation at Ser-1575 is involved in beta-adrenergic-mediated regulation of the channel. As to expression, detected in skeletal muscle T-tubules (at protein level).

It localises to the cell membrane. The protein resides in the sarcolemma. The protein localises to the T-tubule. The enzyme catalyses Ca(2+)(in) = Ca(2+)(out). With respect to regulation, channel activity is blocked by dihydropyridines (DHP), phenylalkylamines, and by benzothiazepines. Functionally, pore-forming, alpha-1S subunit of the voltage-gated calcium channel that gives rise to L-type calcium currents in skeletal muscle. Calcium channels containing the alpha-1S subunit play an important role in excitation-contraction coupling in skeletal muscle via their interaction with RYR1, which triggers Ca(2+) release from the sarcplasmic reticulum and ultimately results in muscle contraction. Long-lasting (L-type) calcium channels belong to the 'high-voltage activated' (HVA) group. The sequence is that of Voltage-dependent L-type calcium channel subunit alpha-1S (CACNA1S) from Oryctolagus cuniculus (Rabbit).